The chain runs to 417 residues: Cell division protein FtsA (417 aa).

This sequence belongs to the FtsA/MreB family. As to quaternary structure, self-interacts. Interacts with FtsZ.

The protein resides in the cell inner membrane. In terms of biological role, cell division protein that is involved in the assembly of the Z ring. May serve as a membrane anchor for the Z ring. The chain is Cell division protein FtsA from Pseudomonas aeruginosa (strain ATCC 15692 / DSM 22644 / CIP 104116 / JCM 14847 / LMG 12228 / 1C / PRS 101 / PAO1).